Reading from the N-terminus, the 70-residue chain is uncharacterized protein (70 aa).

Transmembrane regions (helical) follow at residues Tyr-13–Phe-33 and Gln-39–Ile-59.

The protein localises to the cell membrane. This is an uncharacterized protein from Escherichia coli O6:H1 (strain CFT073 / ATCC 700928 / UPEC).